Consider the following 546-residue polypeptide: Chaperonin GroEL (546 aa).

ATP contacts are provided by residues 29-32 (TMGP), Lys-50, 86-90 (DGTTT), Gly-414, and Asp-492.

The protein belongs to the chaperonin (HSP60) family. As to quaternary structure, forms a cylinder of 14 subunits composed of two heptameric rings stacked back-to-back. Interacts with the co-chaperonin GroES.

Its subcellular location is the cytoplasm. The catalysed reaction is ATP + H2O + a folded polypeptide = ADP + phosphate + an unfolded polypeptide.. In terms of biological role, together with its co-chaperonin GroES, plays an essential role in assisting protein folding. The GroEL-GroES system forms a nano-cage that allows encapsulation of the non-native substrate proteins and provides a physical environment optimized to promote and accelerate protein folding. This Helicobacter pylori (strain HPAG1) protein is Chaperonin GroEL.